Here is a 188-residue protein sequence, read N- to C-terminus: uncharacterized protein (188 aa).

A disordered region spans residues 121–142 (ADTLSRKNKRSSDQKRNGQHFE). The segment covering 130 to 142 (RSSDQKRNGQHFE) has biased composition (basic and acidic residues).

It belongs to the chlamydial CPn_0422/CT_273/TC_0545 family.

This is an uncharacterized protein from Chlamydia trachomatis serovar D (strain ATCC VR-885 / DSM 19411 / UW-3/Cx).